We begin with the raw amino-acid sequence, 330 residues long: MSGNGGGIGTGLGSLAGSGRTVTTIAEVRAAADAVRAAGGRVGFFGTSGALHEGHLTVIRRMAAECDLSIMPLFLAPVPGVTSDAVPAYDRDFDADAALAFDAGVNLVFRPAVAEMYPALPVRTAVVPADELAAPWEGAEDPSFLRMAATALAKYYNIVGPCRAYTGEKDWVPLTVLRRMVVDLSIRAEIVACPVVRLADGLCASSRNSRLSAADRAAAPTLYAALTAAVAAVEAGERDAEAIRSLLRRRISAVAPVDYAEVVDATTLARVDPLAGELRLLVSADFTGTHLFDNVGLTVRDADADADARVTVPAVGTTAAAPATDRRTSG.

H55 (proton donor) is an active-site residue. ATP-binding positions include 167 to 170 (GEKD), V196, and 204 to 207 (ASSR).

It belongs to the pantothenate synthetase family. Homodimer.

Its subcellular location is the cytoplasm. It carries out the reaction (R)-pantoate + beta-alanine + ATP = (R)-pantothenate + AMP + diphosphate + H(+). The protein operates within cofactor biosynthesis; (R)-pantothenate biosynthesis; (R)-pantothenate from (R)-pantoate and beta-alanine: step 1/1. Functionally, catalyzes the condensation of pantoate with beta-alanine in an ATP-dependent reaction via a pantoyl-adenylate intermediate. This chain is Pantothenate synthetase 2, found in Frankia alni (strain DSM 45986 / CECT 9034 / ACN14a).